A 367-amino-acid chain; its full sequence is Alanine racemase (367 aa).

Lys34 (proton acceptor; specific for D-alanine) is an active-site residue. The residue at position 34 (Lys34) is an N6-(pyridoxal phosphate)lysine. Residue Arg131 participates in substrate binding. The Proton acceptor; specific for L-alanine role is filled by Tyr258. Position 306 (Met306) interacts with substrate.

The protein belongs to the alanine racemase family. Pyridoxal 5'-phosphate serves as cofactor.

It carries out the reaction L-alanine = D-alanine. It functions in the pathway amino-acid biosynthesis; D-alanine biosynthesis; D-alanine from L-alanine: step 1/1. Functionally, catalyzes the interconversion of L-alanine and D-alanine. May also act on other amino acids. The protein is Alanine racemase (alr) of Corynebacterium efficiens (strain DSM 44549 / YS-314 / AJ 12310 / JCM 11189 / NBRC 100395).